Reading from the N-terminus, the 397-residue chain is Odorant receptor 85a (397 aa).

Over 1-46 (MIFKYIQEPVLGSLFRSRDSLIYLNRSIDQMGWRLPPRTKPYWWLY) the chain is Cytoplasmic. The chain crosses the membrane as a helical span at residues 47–67 (YIWTLVVIVLVFIFIPYGLIM). Residues 68–83 (TGIKEFKNFTTTDLFT) lie on the Extracellular side of the membrane. N-linked (GlcNAc...) asparagine glycosylation is present at N75. The chain crosses the membrane as a helical span at residues 84-104 (YVQVPVNTNASIMKGIIVLFM). Over 105 to 142 (RRRFSRAQKMMDAMDIRCTKMEEKVQVHRAAALCNRVV) the chain is Cytoplasmic. A helical transmembrane segment spans residues 143 to 163 (VIYHCIYFGYLSMALTGALVI). The Extracellular segment spans residues 164-192 (GKTPFCLYNPLVNPDDHFYLATAIESVTM). Residues 193–213 (AGIILANLILDVYPIIYVVVL) form a helical membrane-spanning segment. Residues 214 to 262 (RIHMELLSERIKTLRTDVEKGDDQHYAELVECVKDHKLIVEYGNTLRPM) lie on the Cytoplasmic side of the membrane. Residues 263-283 (ISATMFIQLLSVGLLLGLAAV) traverse the membrane as a helical segment. Topologically, residues 284 to 294 (SMQFYNTVMER) are extracellular. Residues 295–315 (VVSGVYTIAILSQTFPFCYVC) form a helical membrane-spanning segment. Over 316 to 347 (EQLSSDCESLTNTLFHSKWIGAERRYRTTMLY) the chain is Cytoplasmic. The helical transmembrane segment at 348–368 (FIHNVQQSILFTAGGIFPICL) threads the bilayer. Over 369 to 397 (NTNIKMAKFAFSVVTIVNEMDLAEKLRRE) the chain is Extracellular.

The protein belongs to the insect chemoreceptor superfamily. Heteromeric odorant receptor channel (TC 1.A.69) family. Or2a subfamily. In terms of assembly, interacts with Orco. Complexes exist early in the endomembrane system in olfactory sensory neurons (OSNs), coupling these complexes to the conserved ciliary trafficking pathway. As to expression, expressed in olfactory sensory neurons in the antenna.

It localises to the cell membrane. Its function is as follows. Odorant receptor which mediates acceptance or avoidance behavior, depending on its substrates. The odorant receptor repertoire encodes a large collection of odor stimuli that vary widely in identity, intensity, and duration. May form a complex with Orco to form odorant-sensing units, providing sensitive and prolonged odorant signaling and calcium permeability. The protein is Odorant receptor 85a (Or85a) of Drosophila melanogaster (Fruit fly).